A 370-amino-acid polypeptide reads, in one-letter code: Queuine tRNA-ribosyltransferase (370 aa).

The Proton acceptor role is filled by Asp-89. Residues 89–93 (DSGGF), Asp-143, and Gly-214 each bind substrate. The RNA binding stretch occupies residues 245–251 (GVGKPED). Asp-264 acts as the Nucleophile in catalysis. The RNA binding; important for wobble base 34 recognition stretch occupies residues 269–273 (TRNAR). Residues Cys-302, Cys-304, Cys-307, and His-333 each contribute to the Zn(2+) site.

It belongs to the queuine tRNA-ribosyltransferase family. As to quaternary structure, homodimer. Within each dimer, one monomer is responsible for RNA recognition and catalysis, while the other monomer binds to the replacement base PreQ1. Zn(2+) is required as a cofactor.

The enzyme catalyses 7-aminomethyl-7-carbaguanine + guanosine(34) in tRNA = 7-aminomethyl-7-carbaguanosine(34) in tRNA + guanine. Its pathway is tRNA modification; tRNA-queuosine biosynthesis. Catalyzes the base-exchange of a guanine (G) residue with the queuine precursor 7-aminomethyl-7-deazaguanine (PreQ1) at position 34 (anticodon wobble position) in tRNAs with GU(N) anticodons (tRNA-Asp, -Asn, -His and -Tyr). Catalysis occurs through a double-displacement mechanism. The nucleophile active site attacks the C1' of nucleotide 34 to detach the guanine base from the RNA, forming a covalent enzyme-RNA intermediate. The proton acceptor active site deprotonates the incoming PreQ1, allowing a nucleophilic attack on the C1' of the ribose to form the product. After dissociation, two additional enzymatic reactions on the tRNA convert PreQ1 to queuine (Q), resulting in the hypermodified nucleoside queuosine (7-(((4,5-cis-dihydroxy-2-cyclopenten-1-yl)amino)methyl)-7-deazaguanosine). The chain is Queuine tRNA-ribosyltransferase from Buchnera aphidicola subsp. Acyrthosiphon pisum (strain 5A).